The following is a 734-amino-acid chain: Ribosomal RNA large subunit methyltransferase K/L (734 aa).

The 112-residue stretch at 43–154 folds into the THUMP domain; that stretch reads VGYRSCLWSR…RNQLTLSLDL (112 aa).

Belongs to the methyltransferase superfamily. RlmKL family.

The protein localises to the cytoplasm. It catalyses the reaction guanosine(2445) in 23S rRNA + S-adenosyl-L-methionine = N(2)-methylguanosine(2445) in 23S rRNA + S-adenosyl-L-homocysteine + H(+). It carries out the reaction guanosine(2069) in 23S rRNA + S-adenosyl-L-methionine = N(2)-methylguanosine(2069) in 23S rRNA + S-adenosyl-L-homocysteine + H(+). Its function is as follows. Specifically methylates the guanine in position 2445 (m2G2445) and the guanine in position 2069 (m7G2069) of 23S rRNA. The sequence is that of Ribosomal RNA large subunit methyltransferase K/L from Hydrogenovibrio crunogenus (strain DSM 25203 / XCL-2) (Thiomicrospira crunogena).